Here is a 281-residue protein sequence, read N- to C-terminus: Probable endonuclease 4 (281 aa).

The Zn(2+) site is built by H67, H107, E142, D176, H179, H211, D224, H226, and E256.

It belongs to the AP endonuclease 2 family. Zn(2+) serves as cofactor.

The enzyme catalyses Endonucleolytic cleavage to 5'-phosphooligonucleotide end-products.. Functionally, endonuclease IV plays a role in DNA repair. It cleaves phosphodiester bonds at apurinic or apyrimidinic (AP) sites, generating a 3'-hydroxyl group and a 5'-terminal sugar phosphate. This chain is Probable endonuclease 4, found in Alkaliphilus oremlandii (strain OhILAs) (Clostridium oremlandii (strain OhILAs)).